We begin with the raw amino-acid sequence, 315 residues long: ATP synthase gamma chain (315 aa).

F-type ATPases have 2 components, CF(1) - the catalytic core - and CF(0) - the membrane proton channel. CF(1) has five subunits: alpha(3), beta(3), gamma(1), delta(1), epsilon(1). CF(0) has four main subunits: a(1), b(1), b'(1) and c(9-12).

Its subcellular location is the cellular thylakoid membrane. Produces ATP from ADP in the presence of a proton gradient across the membrane. The gamma chain is believed to be important in regulating ATPase activity and the flow of protons through the CF(0) complex. Its function is as follows. The complex from the organism is particularly stable to disruption and remains functional after 6 hrs at 55 degrees Celsius. This chain is ATP synthase gamma chain, found in Thermosynechococcus vestitus (strain NIES-2133 / IAM M-273 / BP-1).